We begin with the raw amino-acid sequence, 291 residues long: Flavonol synthase/flavanone 3-hydroxylase (291 aa).

A Fe2OG dioxygenase domain is found at 151–250; it reads CWYVMNINHY…RMSWPVLVSP (100 aa). Fe cation-binding residues include His175, Asp177, and His231.

The protein belongs to the iron/ascorbate-dependent oxidoreductase family. It depends on L-ascorbate as a cofactor. Fe cation is required as a cofactor.

The protein localises to the cytoplasm. It catalyses the reaction a (2R,3R)-dihydroflavonol + 2-oxoglutarate + O2 = a flavonol + succinate + CO2 + H2O. The enzyme catalyses a (2S)-flavan-4-one + 2-oxoglutarate + O2 = a (2R,3R)-dihydroflavonol + succinate + CO2. The protein operates within secondary metabolite biosynthesis; flavonoid biosynthesis. Functionally, catalyzes the formation of flavonols from dihydroflavonols. It can act on dihydrokaempferol to produce kaempferol, on dihydroquercetin to produce quercitin and on dihydromyricetin to produce myricetin. This chain is Flavonol synthase/flavanone 3-hydroxylase, found in Matthiola incana (Common stock).